The chain runs to 404 residues: Rhomboid-related protein 3 (404 aa).

2 EF-hand domains span residues 34-69 and 70-105; these read APED…HSSK and LDPH…KRSN. 7 consecutive transmembrane segments (helical) span residues 164–184, 218–238, 250–270, 274–294, 303–325, 338–358, and 371–391; these read WFMI…GVSL, IFMH…LLVG, IGLV…VADM, VVGS…NIVM, FKLL…AVWL, PSFV…VVVL, and WWIF…WNIF. Catalysis depends on S278, which acts as the Nucleophile. H343 is an active-site residue.

Belongs to the peptidase S54 family.

It is found in the membrane. The catalysed reaction is Cleaves type-1 transmembrane domains using a catalytic dyad composed of serine and histidine that are contributed by different transmembrane domains.. Functionally, may be involved in regulated intramembrane proteolysis and the subsequent release of functional polypeptides from their membrane anchors. The chain is Rhomboid-related protein 3 (RHBDL3) from Homo sapiens (Human).